A 232-amino-acid polypeptide reads, in one-letter code: MSQLIPAVRVAATAKPAKSAIIFVHGLGDSGSGWSWFPQLAKQSNIIKNCDSINYVFPNAPLMPITANGGYVMPGWFDIYEFGNPEAKQDIDGFHKSCETLKSLIKEQIDNHDIPADKIIIGGFSQGAAVSLATVALLDFKVGGVVALSGFSPIKESLPQIMNKANLETPIFQGHGTADPIVNFDFGKQTSELYQKLGFKNVKFHTYPGVAHSASEEELADAMNFIDDVLKK.

Active-site charge relay system residues include Ser125, Asp179, and His212.

This sequence belongs to the AB hydrolase superfamily. AB hydrolase 2 family.

It is found in the cytoplasm. The protein resides in the nucleus. It carries out the reaction S-hexadecanoyl-L-cysteinyl-[protein] + H2O = L-cysteinyl-[protein] + hexadecanoate + H(+). Hydrolyzes fatty acids from S-acylated cysteine residues in proteins with a strong preference for palmitoylated G-alpha proteins over other acyl substrates. Mediates the deacylation of G-alpha proteins such as GPA1 in vivo, but has weak or no activity toward palmitoylated Ras proteins. Has weak lysophospholipase activity in vitro; however such activity may not exist in vivo. The protein is Acyl-protein thioesterase 1 of Debaryomyces hansenii (strain ATCC 36239 / CBS 767 / BCRC 21394 / JCM 1990 / NBRC 0083 / IGC 2968) (Yeast).